Consider the following 425-residue polypeptide: Cysteate synthase (425 aa).

Lys-106 is subject to N6-(pyridoxal phosphate)lysine. Pyridoxal 5'-phosphate is bound by residues Asn-132 and Thr-382.

The protein belongs to the threonine synthase family. Cysteate synthase subfamily. Homotrimer. The cofactor is pyridoxal 5'-phosphate.

The enzyme catalyses O-phospho-L-serine + sulfite + H(+) = L-cysteate + phosphate. Its pathway is cofactor biosynthesis; coenzyme M biosynthesis. Specifically catalyzes the beta-elimination of phosphate from L-phosphoserine and the beta-addition of sulfite to the dehydroalanine intermediate to produce L-cysteate. The protein is Cysteate synthase of Methanosphaerula palustris (strain ATCC BAA-1556 / DSM 19958 / E1-9c).